The primary structure comprises 83 residues: SPbeta prophage-derived uncharacterized protein YopE (83 aa).

2 helical membrane passes run alanine 5–valine 25 and valine 60–phenylalanine 80.

The protein resides in the cell membrane. The polypeptide is SPbeta prophage-derived uncharacterized protein YopE (yopE) (Bacillus subtilis (strain 168)).